A 355-amino-acid chain; its full sequence is uncharacterized protein (355 aa).

Residues 1–104 (MGTKGLPLYP…EQAKTVQGGR (104 aa)) form a disordered region. Lys-19 is modified (N6-acetyllysine). Over residues 45–54 (EEGTDLEGDM) the composition is skewed to acidic residues. Ser-175 carries the post-translational modification Phosphoserine. Disordered stretches follow at residues 247-310 (PRGS…AAYK) and 325-355 (SITS…GKKP). A Phosphotyrosine modification is found at Tyr-293. Ser-294 is subject to Phosphoserine. A compositionally biased stretch (polar residues) spans 325–334 (SITSLSSRTT). Residues 336–348 (LPAADPFALAPFP) are compositionally biased toward low complexity.

This is an uncharacterized protein from Homo sapiens (Human).